The primary structure comprises 1155 residues: ATP-dependent helicase/deoxyribonuclease subunit B (1155 aa).

8–15 (GRSGSGKS) lines the ATP pocket. [4Fe-4S] cluster contacts are provided by Cys793, Cys1115, Cys1118, and Cys1124.

It belongs to the helicase family. AddB/RexB type 1 subfamily. Heterodimer of AddA and AddB. Mg(2+) is required as a cofactor. [4Fe-4S] cluster serves as cofactor.

Functionally, the heterodimer acts as both an ATP-dependent DNA helicase and an ATP-dependent, dual-direction single-stranded exonuclease. Recognizes the chi site generating a DNA molecule suitable for the initiation of homologous recombination. The AddB subunit has 5' -&gt; 3' nuclease activity but not helicase activity. In Clostridioides difficile (strain 630) (Peptoclostridium difficile), this protein is ATP-dependent helicase/deoxyribonuclease subunit B.